A 53-amino-acid chain; its full sequence is Large ribosomal subunit protein bL33A (53 aa).

The protein belongs to the bacterial ribosomal protein bL33 family.

This is Large ribosomal subunit protein bL33A (rpmG1) from Mycoplasma genitalium (strain ATCC 33530 / DSM 19775 / NCTC 10195 / G37) (Mycoplasmoides genitalium).